The primary structure comprises 634 residues: Chaperone protein DnaK (634 aa).

Threonine 199 is subject to Phosphothreonine; by autocatalysis. Residues 601–618 show a composition bias toward low complexity; it reads AAAGQAQAESGAGAQGNA. Residues 601-634 are disordered; that stretch reads AAAGQAQAESGAGAQGNAKPDDVVDAEFEEVDKK. Acidic residues predominate over residues 623–634; that stretch reads VVDAEFEEVDKK.

This sequence belongs to the heat shock protein 70 family.

Acts as a chaperone. This Acidithiobacillus ferrooxidans (strain ATCC 23270 / DSM 14882 / CIP 104768 / NCIMB 8455) (Ferrobacillus ferrooxidans (strain ATCC 23270)) protein is Chaperone protein DnaK.